The chain runs to 102 residues: Small ribosomal subunit protein uS10 (102 aa).

It belongs to the universal ribosomal protein uS10 family. In terms of assembly, part of the 30S ribosomal subunit.

Its function is as follows. Involved in the binding of tRNA to the ribosomes. The sequence is that of Small ribosomal subunit protein uS10 from Streptococcus pyogenes serotype M12 (strain MGAS2096).